Reading from the N-terminus, the 194-residue chain is Crossover junction endodeoxyribonuclease RuvC (194 aa).

Catalysis depends on residues D7, E68, and D141. Residues D7, E68, and D141 each contribute to the Mg(2+) site. The tract at residues 162–194 is disordered; that stretch reads GGEREQHLTAAQRQWAEAAQNSTRRRKNSDRGM. A compositionally biased stretch (basic residues) spans 184–194; it reads TRRRKNSDRGM.

Belongs to the RuvC family. Homodimer which binds Holliday junction (HJ) DNA. The HJ becomes 2-fold symmetrical on binding to RuvC with unstacked arms; it has a different conformation from HJ DNA in complex with RuvA. In the full resolvosome a probable DNA-RuvA(4)-RuvB(12)-RuvC(2) complex forms which resolves the HJ. Requires Mg(2+) as cofactor.

It is found in the cytoplasm. The catalysed reaction is Endonucleolytic cleavage at a junction such as a reciprocal single-stranded crossover between two homologous DNA duplexes (Holliday junction).. Its function is as follows. The RuvA-RuvB-RuvC complex processes Holliday junction (HJ) DNA during genetic recombination and DNA repair. Endonuclease that resolves HJ intermediates. Cleaves cruciform DNA by making single-stranded nicks across the HJ at symmetrical positions within the homologous arms, yielding a 5'-phosphate and a 3'-hydroxyl group; requires a central core of homology in the junction. The consensus cleavage sequence is 5'-(A/T)TT(C/G)-3'. Cleavage occurs on the 3'-side of the TT dinucleotide at the point of strand exchange. HJ branch migration catalyzed by RuvA-RuvB allows RuvC to scan DNA until it finds its consensus sequence, where it cleaves and resolves the cruciform DNA. The protein is Crossover junction endodeoxyribonuclease RuvC of Bifidobacterium longum subsp. infantis (strain ATCC 15697 / DSM 20088 / JCM 1222 / NCTC 11817 / S12).